The sequence spans 238 residues: E3 ubiquitin-protein ligase ZNRF2 (238 aa).

A disordered region spans residues 1–137 (MGAKQSGPAA…AGGGPGGPRL (137 aa)). Residue Gly2 is the site of N-myristoyl glycine attachment. 9 positions are modified to phosphoserine: Ser20, Ser24, Ser75, Ser82, Ser107, Ser110, Ser141, Ser147, and Ser189. A compositionally biased stretch (low complexity) spans 35-77 (GARAARFAAPVSGAQQPSASAGAAAAAAAAASAPAAPRSRSLG). Residues 195 to 236 (CAICLEELQQGDTIARLPCLCIYHKGCIDEWFEVNRSCPEHP) form an RING-type; atypical zinc finger.

Interacts with UBE2N. Interacts with ZNRF1. Interacts (when phosphorylated) with YWHAE. Phosphorylated; leading to binding to YWHAE. Phosphorylated by MTOR at Ser-147 and dephosphorylated by PP6C. Ser-147 phosphorylation stimulates vesicle-to-cytosol translocation. In terms of tissue distribution, expressed primarily in the nervous system. Expression is more intense in the granular cell layer of hippocampus, Purkinje cell layer of the cerebellum and the granular cell layer of the olfactory bulb. Detected in sensory neurons but not expressed in sympatic or enteric neurons. Expressed in testis, adipose tissue, columnar epithelial cells of the gut.

Its subcellular location is the endosome membrane. The protein resides in the lysosome membrane. The protein localises to the presynaptic cell membrane. It is found in the cytoplasm. It carries out the reaction S-ubiquitinyl-[E2 ubiquitin-conjugating enzyme]-L-cysteine + [acceptor protein]-L-lysine = [E2 ubiquitin-conjugating enzyme]-L-cysteine + N(6)-ubiquitinyl-[acceptor protein]-L-lysine.. It functions in the pathway protein modification; protein ubiquitination. Functionally, E3 ubiquitin-protein ligase that plays a role in the establishment and maintenance of neuronal transmission and plasticity. Ubiquitinates the Na(+)/K(+) ATPase alpha-1 subunit/ATP1A1 and thereby influences its endocytosis and/or degradation. Also acts as a positive regulator of mTORC1 activation by amino acids, which functions upstream of the V-ATPase and of Rag-GTPases. In turn, phosphorylation by mTOR leads to its inhibition via targeting to the cytosol allowing a self-regulating feedback mechanism. The polypeptide is E3 ubiquitin-protein ligase ZNRF2 (Znrf2) (Mus musculus (Mouse)).